Reading from the N-terminus, the 64-residue chain is Metallothionein-A (64 aa).

The protein belongs to the metallothionein superfamily. Type 4 family.

In terms of biological role, metallothioneins have a high content of cysteine residues that bind various heavy metals. The chain is Metallothionein-A (MTA) from Strongylocentrotus purpuratus (Purple sea urchin).